The primary structure comprises 556 residues: MKSDIEISHQAPLLPIQDIAKKINVDQDDIEFYGKYKAKFSQSIWSKITSKKQGKLVLVTSINPTPAGEGKTTVTVGLGQALNQLGKSAIIALREPSLGPCFGLKGGAAGGGYSQVVPMEDLNLHFTGDFHAITSANNLLAAMLDNSLYQGNPLNINPKKIIFKRCMDMNDRALRHLVIGLGGDKDGVVREDSFVITVASEIMSILCLAKDINDLKQRLARIIVAYNYEGEPVSAEDLNAVGAMATLLKDALNPNLVQTLENTPAIIHGGPFANIAHGCNSLRATKLALQLADITVTEAGFGADLGAEKFFDIKCRIGDLQPDCAVLVVTTKALKYNGGLGKTQWDHENLTALATGIENLGKHIENLKKYGVPVIVTVNAYVTDSAKEHEFIAQYCQQRGCRFAISQVWEKGGAGGIELANQVIDTLENDAPQFQLLYPDNMPLKQKIETIAQEIYGAKGVTYNANAQEMLTKIEDMGFGHFPICMAKTQYSLSDDPALLGRPTDFTINIREVYVSAGAGFVVSLTGTINTMPGLPKKPAAMAMDVDDHGAIKGLF.

65–72 provides a ligand contact to ATP; the sequence is TPAGEGKT.

This sequence belongs to the formate--tetrahydrofolate ligase family.

The enzyme catalyses (6S)-5,6,7,8-tetrahydrofolate + formate + ATP = (6R)-10-formyltetrahydrofolate + ADP + phosphate. It participates in one-carbon metabolism; tetrahydrofolate interconversion. This chain is Formate--tetrahydrofolate ligase, found in Proteus mirabilis (strain HI4320).